The primary structure comprises 847 residues: Protein HIR2 (847 aa).

WD repeat units follow at residues 10–46, 113–153, 155–194, 259–305, and 309–348; these read LHDG…NAAT, KDNE…LKSS, ELKS…TTKL, KFSP…PLFD, and VVNS…LGDV. A disordered region spans residues 368-399; sequence PFKPKAEEPDTKLPPNKTAQQTTTNSKKQPKA. A compositionally biased stretch (polar residues) spans 384-394; it reads KTAQQTTTNSK. 2 WD repeats span residues 508-548 and 558-597; these read RKDN…IYVT and PMLL…IAFP.

This sequence belongs to the WD repeat HIR1 family.

Its subcellular location is the nucleus. Functionally, required for replication-independent chromatin assembly and for the periodic repression of histone gene transcription during the cell cycle. This chain is Protein HIR2 (HIR2), found in Kluyveromyces lactis (strain ATCC 8585 / CBS 2359 / DSM 70799 / NBRC 1267 / NRRL Y-1140 / WM37) (Yeast).